Here is a 458-residue protein sequence, read N- to C-terminus: Elongation factor 1-alpha (458 aa).

Glycine 2 is subject to N,N,N-trimethylglycine; by EFM7. Lysine 3 carries the N6,N6-dimethyllysine; by EFM7; alternate modification. Lysine 3 carries the N6-methyllysine; by EFM7; alternate modification. A tr-type G domain is found at 5–240; the sequence is KSHINVVVIG…DAIEQPSRPT (236 aa). The segment at 14–21 is G1; it reads GHVDSGKS. Serine 18 carries the post-translational modification Phosphoserine. 2 residues coordinate GTP: serine 21 and threonine 22. Lysine 30 bears the N6-methyllysine; by EFM1 mark. The G2 stretch occupies residues 70–74; the sequence is GITID. At threonine 72 the chain carries Phosphothreonine. Lysine 79 carries the post-translational modification N6,N6,N6-trimethyllysine; by EFM5. Residue threonine 82 is modified to Phosphothreonine. The tract at residues 91 to 94 is G3; sequence DAPG. Asparagine 153, lysine 154, and aspartate 156 together coordinate GTP. The interval 153 to 156 is G4; the sequence is NKMD. At serine 163 the chain carries Phosphoserine. Positions 192, 193, and 194 each coordinate GTP. The G5 stretch occupies residues 192–194; it reads SGW. Glycyl lysine isopeptide (Lys-Gly) (interchain with G-Cter in ubiquitin) cross-links involve residues lysine 224, lysine 242, and lysine 253. Threonine 259 carries the phosphothreonine modification. Lysine 271 participates in a covalent cross-link: Glycyl lysine isopeptide (Lys-Gly) (interchain with G-Cter in ubiquitin). Position 289 is a phosphoserine (serine 289). An N6,N6-dimethyllysine; by EFM4; alternate modification is found at lysine 316. Position 316 is an N6-methyllysine; by EFM4; alternate (lysine 316). Lysine 390 carries the N6-methyllysine; by EFM6 modification. Lysine 393 is covalently cross-linked (Glycyl lysine isopeptide (Lys-Gly) (interchain with G-Cter in ubiquitin)). Serine 414 carries the post-translational modification Phosphoserine. Threonine 430 bears the Phosphothreonine mark. Residue lysine 437 forms a Glycyl lysine isopeptide (Lys-Gly) (interchain with G-Cter in ubiquitin) linkage. Residue lysine 458 is modified to Lysine methyl ester.

The protein belongs to the TRAFAC class translation factor GTPase superfamily. Classic translation factor GTPase family. EF-Tu/EF-1A subfamily. In terms of assembly, the eukaryotic elongation factor 1 complex (eEF1) is probably a heterohexamer. Two trimeric complexes, each composed of eEF1A (TEF1 or TEF2), eEF1Balpha (EFB1) and eEF1Bgamma (CAM1 or TEF4), are probably dimerized via the eF1Bgamma subunits. Interacts with eEF1Balpha; the interaction is direct. Interacts with GCN2 (via C-terminus); this interaction is direct, occurs in amino acid-repleted cells, may be stabilized in a ribosome-dependent manner, reduces GCN2-mediated eIF-2-alpha phosphorylation and is lost in amino acid-starved cells and by uncharged tRNAs. Interacts with CEX1. Interacts with elongation factor 3 (YEF3 or HEF3). Interacts with NAP1. Interacts with SRV2. Interacts with chaperone ZPR1; the interaction is required for its proper folding. Binds to actin and forms a ternary complex with BNI1 and profilin. Interacts with the proteasome, probably via RPT1. Associates with ribosomes. Post-translationally, S-thiolated in response to oxidative stress, probably inhibiting the protein and causing a reduction in protein synthesis. Glutaminylated at Glu-45. An L-glutamine is linked to Glu-45 via the alpha amino group. This glutaminylation is yeast-specific and not essential for the normal functions of eEF1A. However, eEF1A glutaminylation slightly reduced growth under antibiotic-induced translational stress conditions.

The protein localises to the cytoplasm. It is found in the cytoskeleton. It functions in the pathway protein biosynthesis; polypeptide chain elongation. Inhibited by narciclasine. Functionally, GTP-binding component of the eukaryotic elongation factor 1 complex (eEF1). In its active GTP-bound form, binds to and delivers aminoacyl-tRNA to the A-site of ribosomes during protein biosynthesis. In the presence of a correct codon-anticodon match between the aminoacyl-tRNA and the A-site codon of the ribosome-bound mRNA, the ribosome acts as a GTPase activator and the GTP is hydrolyzed. The inactive GDP-bound form leaves the ribosome and must be recycled by its guanine nucleotide exchange factor (GEF) (eEF1B subcomplex) before binding another molecule of aminoacyl-tRNA. Required for nuclear export of aminoacyl-tRNAs. May also be involved in translational quality control by targeting cotranslationally damaged proteins to the proteasome. Also exhibits actin filament-binding and -bundling activities and is involved in cytoskeleton organization. Plays a role as a negative regulator of GCN2 kinase activity by inhibiting GCN2-mediated eIF-2-alpha phosphorylation in amino acid-repleted cells. This Saccharomyces cerevisiae (strain ATCC 204508 / S288c) (Baker's yeast) protein is Elongation factor 1-alpha (TEF1).